We begin with the raw amino-acid sequence, 1703 residues long: Pecanex-like protein 1 (1703 aa).

The next 2 membrane-spanning stretches (helical) occupy residues 31-53 (VNALHLYIWLFLLCFPFTLYMAL) and 57-74 (MVIVGIYCGVIAAMFLLL). Residues 91–100 (VEHQTRESKG) show a composition bias toward basic and acidic residues. A disordered region spans residues 91–126 (VEHQTRESKGSRGGTGGANDPVTRREDSNGLGDPGG). Residue Asn-256 is glycosylated (N-linked (GlcNAc...) asparagine). A run of 3 helical transmembrane segments spans residues 416–438 (VLAVVLAVLVAFLGSVLLIHGFF), 477–499 (AYSRPVYFCLCCGLIWLLHYGSL), and 525–547 (LVIVFTLCFPIIFFVGLLPQVNT). N-linked (GlcNAc...) asparagine glycosylation is present at Asn-564. Transmembrane regions (helical) follow at residues 569 to 591 (LLSALYSILRSIVTVALLYCFCY), 603 to 622 (IPVLFSVFCGLLVAVSYHLS), 675 to 697 (LIVCVVIAVLYFAIHVSTVFIAL), and 704 to 721 (VLYGLLGAVGLLTHYLLP). N-linked (GlcNAc...) asparagine glycans are attached at residues Asn-988, Asn-1129, and Asn-1391. Disordered regions lie at residues 1475–1556 (VQSG…HSIP) and 1577–1598 (TDPLSQHHHPHHHPQQHNPTHA). Low complexity-rich tracts occupy residues 1485–1510 (ARASVVSQSSSYRYSSSRHSSLRTST) and 1518–1556 (RSSTSQLSLRTLPTSLQLRLGSTSDPAGPSSSLSSHSIP). The segment covering 1582-1591 (QHHHPHHHPQ) has biased composition (basic residues). The N-linked (GlcNAc...) asparagine glycan is linked to Asn-1622.

This sequence belongs to the pecanex family.

Its subcellular location is the membrane. This is Pecanex-like protein 1 from Takifugu rubripes (Japanese pufferfish).